The primary structure comprises 98 residues: NADH-ubiquinone oxidoreductase chain 4L (98 aa).

3 consecutive transmembrane segments (helical) span residues 1-21 (MSLI…GLLM), 26-46 (LMSA…FTTL), and 61-81 (IILL…LVMI).

It belongs to the complex I subunit 4L family. In terms of assembly, core subunit of respiratory chain NADH dehydrogenase (Complex I) which is composed of 45 different subunits.

The protein resides in the mitochondrion inner membrane. The enzyme catalyses a ubiquinone + NADH + 5 H(+)(in) = a ubiquinol + NAD(+) + 4 H(+)(out). Functionally, core subunit of the mitochondrial membrane respiratory chain NADH dehydrogenase (Complex I) which catalyzes electron transfer from NADH through the respiratory chain, using ubiquinone as an electron acceptor. Part of the enzyme membrane arm which is embedded in the lipid bilayer and involved in proton translocation. This Physeter macrocephalus (Sperm whale) protein is NADH-ubiquinone oxidoreductase chain 4L (MT-ND4L).